A 111-amino-acid chain; its full sequence is UPF0145 protein BTH_I2656 (111 aa).

It belongs to the UPF0145 family.

The protein is UPF0145 protein BTH_I2656 of Burkholderia thailandensis (strain ATCC 700388 / DSM 13276 / CCUG 48851 / CIP 106301 / E264).